The sequence spans 556 residues: DNA ligase B (556 aa).

K124 functions as the N6-AMP-lysine intermediate in the catalytic mechanism.

The protein belongs to the NAD-dependent DNA ligase family. LigB subfamily.

The catalysed reaction is NAD(+) + (deoxyribonucleotide)n-3'-hydroxyl + 5'-phospho-(deoxyribonucleotide)m = (deoxyribonucleotide)n+m + AMP + beta-nicotinamide D-nucleotide.. Functionally, catalyzes the formation of phosphodiester linkages between 5'-phosphoryl and 3'-hydroxyl groups in double-stranded DNA using NAD as a coenzyme and as the energy source for the reaction. This chain is DNA ligase B, found in Pseudomonas fluorescens (strain ATCC BAA-477 / NRRL B-23932 / Pf-5).